The following is a 273-amino-acid chain: Octanoyltransferase LipM (273 aa).

A BPL/LPL catalytic domain is found at 33-244; the sequence is GKTPPTLRFY…AFTRLYAVEF (212 aa). The Acyl-thioester intermediate role is filled by cysteine 146.

This sequence belongs to the octanoyltransferase LipM family. In terms of assembly, monomer.

The enzyme catalyses octanoyl-[ACP] + L-lysyl-[protein] = N(6)-octanoyl-L-lysyl-[protein] + holo-[ACP] + H(+). The protein operates within protein modification; protein lipoylation via endogenous pathway; protein N(6)-(lipoyl)lysine from octanoyl-[acyl-carrier-protein]. Functionally, catalyzes the transfer of endogenously produced octanoic acid from octanoyl-acyl-carrier-protein onto the lipoyl domain of GcvH, an intermediate carrier during protein lipoylation. The chain is Octanoyltransferase LipM from Moorella thermoacetica (strain ATCC 39073 / JCM 9320).